A 434-amino-acid polypeptide reads, in one-letter code: Histidinol dehydrogenase (434 aa).

Tyr130, Gln191, and Asn214 together coordinate NAD(+). Substrate is bound by residues Ser237, Gln259, and His262. Zn(2+) contacts are provided by Gln259 and His262. Active-site proton acceptor residues include Glu328 and His329. Positions 329, 362, 416, and 421 each coordinate substrate. Asp362 contributes to the Zn(2+) binding site. Position 421 (His421) interacts with Zn(2+).

This sequence belongs to the histidinol dehydrogenase family. Requires Zn(2+) as cofactor.

It carries out the reaction L-histidinol + 2 NAD(+) + H2O = L-histidine + 2 NADH + 3 H(+). Its pathway is amino-acid biosynthesis; L-histidine biosynthesis; L-histidine from 5-phospho-alpha-D-ribose 1-diphosphate: step 9/9. Functionally, catalyzes the sequential NAD-dependent oxidations of L-histidinol to L-histidinaldehyde and then to L-histidine. This is Histidinol dehydrogenase from Rhodospirillum rubrum (strain ATCC 11170 / ATH 1.1.1 / DSM 467 / LMG 4362 / NCIMB 8255 / S1).